We begin with the raw amino-acid sequence, 86 residues long: Mitochondrial import inner membrane translocase subunit Tim10 (86 aa).

The Twin CX3C motif signature appears at 29 to 54 (CQAKCIATAFRESELTKGEAVCLDRC). 2 disulfide bridges follow: Cys29-Cys54 and Cys33-Cys50.

It belongs to the small Tim family. As to quaternary structure, heterohexamer; composed of 3 copies of tim-9/tin-9.1 and 3 copies of tim-10/tin-10, named soluble 70 kDa complex. The complex associates with the tim-22 component of the TIM22 complex. Interacts with multi-pass transmembrane proteins in transit.

It localises to the mitochondrion inner membrane. Its function is as follows. Mitochondrial intermembrane chaperone that participates in the import and insertion of multi-pass transmembrane proteins into the mitochondrial inner membrane. May also be required for the transfer of beta-barrel precursors from the TOM complex to the sorting and assembly machinery (SAM complex) of the outer membrane. Acts as a chaperone-like protein that protects the hydrophobic precursors from aggregation and guide them through the mitochondrial intermembrane space. In Caenorhabditis elegans, this protein is Mitochondrial import inner membrane translocase subunit Tim10 (tin-10).